The primary structure comprises 271 residues: Putative hydro-lyase OCAR_7359/OCA5_c07590 (271 aa).

This sequence belongs to the D-glutamate cyclase family.

In Afipia carboxidovorans (strain ATCC 49405 / DSM 1227 / KCTC 32145 / OM5) (Oligotropha carboxidovorans), this protein is Putative hydro-lyase OCAR_7359/OCA5_c07590.